The primary structure comprises 185 residues: Ribosome-recycling factor (185 aa).

Belongs to the RRF family.

It localises to the cytoplasm. Its function is as follows. Responsible for the release of ribosomes from messenger RNA at the termination of protein biosynthesis. May increase the efficiency of translation by recycling ribosomes from one round of translation to another. The protein is Ribosome-recycling factor of Coxiella burnetii (strain RSA 493 / Nine Mile phase I).